A 506-amino-acid chain; its full sequence is Glycine--tRNA ligase (506 aa).

Substrate-binding residues include Arg-99 and Glu-189. ATP contacts are provided by residues 221–223 (RNE), 231–236 (FRVREL), 306–307 (EI), and 365–368 (GVDR). 236–240 (LEQME) contributes to the substrate binding site. 361 to 365 (EPSAG) provides a ligand contact to substrate.

It belongs to the class-II aminoacyl-tRNA synthetase family. As to quaternary structure, homodimer.

The protein localises to the cytoplasm. The enzyme catalyses tRNA(Gly) + glycine + ATP = glycyl-tRNA(Gly) + AMP + diphosphate. In terms of biological role, catalyzes the attachment of glycine to tRNA(Gly). In Deinococcus radiodurans (strain ATCC 13939 / DSM 20539 / JCM 16871 / CCUG 27074 / LMG 4051 / NBRC 15346 / NCIMB 9279 / VKM B-1422 / R1), this protein is Glycine--tRNA ligase.